A 325-amino-acid polypeptide reads, in one-letter code: Beta-ketoacyl-[acyl-carrier-protein] synthase III (325 aa).

Catalysis depends on residues cysteine 119 and histidine 252. The ACP-binding stretch occupies residues 253-257; the sequence is QANIR. The active site involves asparagine 282.

Belongs to the thiolase-like superfamily. FabH family. In terms of assembly, homodimer.

It is found in the cytoplasm. It catalyses the reaction malonyl-[ACP] + acetyl-CoA + H(+) = 3-oxobutanoyl-[ACP] + CO2 + CoA. It participates in lipid metabolism; fatty acid biosynthesis. Catalyzes the condensation reaction of fatty acid synthesis by the addition to an acyl acceptor of two carbons from malonyl-ACP. Catalyzes the first condensation reaction which initiates fatty acid synthesis and may therefore play a role in governing the total rate of fatty acid production. Possesses both acetoacetyl-ACP synthase and acetyl transacylase activities. Its substrate specificity determines the biosynthesis of branched-chain and/or straight-chain of fatty acids. The chain is Beta-ketoacyl-[acyl-carrier-protein] synthase III from Acidovorax ebreus (strain TPSY) (Diaphorobacter sp. (strain TPSY)).